The primary structure comprises 130 residues: Small ribosomal subunit protein uS9 (130 aa).

The disordered stretch occupies residues 102-130; it reads GFLTRDPRMKERKKYGLKKARRAPQFSKR. Residues 111–130 show a composition bias toward basic residues; the sequence is KERKKYGLKKARRAPQFSKR.

The protein belongs to the universal ribosomal protein uS9 family.

The polypeptide is Small ribosomal subunit protein uS9 (Clostridium novyi (strain NT)).